The following is a 448-amino-acid chain: Eukaryotic translation initiation factor 3 subunit E (448 aa).

One can recognise a PCI domain in the interval 254-423; it reads TDLFFSPAYI…GTVIMNHPPQ (170 aa).

Belongs to the eIF-3 subunit E family. As to quaternary structure, component of the eukaryotic translation initiation factor 3 (eIF-3) complex.

Its subcellular location is the cytoplasm. Functionally, component of the eukaryotic translation initiation factor 3 (eIF-3) complex, which is involved in protein synthesis of a specialized repertoire of mRNAs and, together with other initiation factors, stimulates binding of mRNA and methionyl-tRNAi to the 40S ribosome. The eIF-3 complex specifically targets and initiates translation of a subset of mRNAs involved in cell proliferation. The protein is Eukaryotic translation initiation factor 3 subunit E (int6) of Emericella nidulans (strain FGSC A4 / ATCC 38163 / CBS 112.46 / NRRL 194 / M139) (Aspergillus nidulans).